We begin with the raw amino-acid sequence, 273 residues long: Phosphatidylglycerol--prolipoprotein diacylglyceryl transferase (273 aa).

A run of 7 helical transmembrane segments spans residues 21 to 41 (VSIR…LWLA), 60 to 80 (LLFA…VIFY), 95 to 115 (VWTG…AMFW), 124 to 144 (FFGV…MGRM), 176 to 196 (SQLY…NWFI), 203 to 223 (GSVS…VEFV), and 237 to 257 (ISMG…MMVW). Residue arginine 143 participates in a 1,2-diacyl-sn-glycero-3-phospho-(1'-sn-glycerol) binding.

Belongs to the Lgt family.

Its subcellular location is the cell inner membrane. It catalyses the reaction L-cysteinyl-[prolipoprotein] + a 1,2-diacyl-sn-glycero-3-phospho-(1'-sn-glycerol) = an S-1,2-diacyl-sn-glyceryl-L-cysteinyl-[prolipoprotein] + sn-glycerol 1-phosphate + H(+). It functions in the pathway protein modification; lipoprotein biosynthesis (diacylglyceryl transfer). In terms of biological role, catalyzes the transfer of the diacylglyceryl group from phosphatidylglycerol to the sulfhydryl group of the N-terminal cysteine of a prolipoprotein, the first step in the formation of mature lipoproteins. This Vibrio parahaemolyticus serotype O3:K6 (strain RIMD 2210633) protein is Phosphatidylglycerol--prolipoprotein diacylglyceryl transferase.